Reading from the N-terminus, the 218-residue chain is uncharacterized protein (218 aa).

This is an uncharacterized protein from Ureaplasma parvum serovar 3 (strain ATCC 700970).